The primary structure comprises 388 residues: Succinate--CoA ligase [ADP-forming] subunit beta (388 aa).

The 236-residue stretch at 9–244 folds into the ATP-grasp domain; the sequence is KEILRKFGVA…LDEEDPAEIE (236 aa). ATP is bound by residues K46, 53–55, E99, A102, and E107; that span reads GRG. Mg(2+) contacts are provided by N199 and D213. Residues N264 and 321–323 contribute to the substrate site; that span reads GIM.

It belongs to the succinate/malate CoA ligase beta subunit family. Heterotetramer of two alpha and two beta subunits. Mg(2+) is required as a cofactor.

It carries out the reaction succinate + ATP + CoA = succinyl-CoA + ADP + phosphate. The enzyme catalyses GTP + succinate + CoA = succinyl-CoA + GDP + phosphate. The protein operates within carbohydrate metabolism; tricarboxylic acid cycle; succinate from succinyl-CoA (ligase route): step 1/1. Functionally, succinyl-CoA synthetase functions in the citric acid cycle (TCA), coupling the hydrolysis of succinyl-CoA to the synthesis of either ATP or GTP and thus represents the only step of substrate-level phosphorylation in the TCA. The beta subunit provides nucleotide specificity of the enzyme and binds the substrate succinate, while the binding sites for coenzyme A and phosphate are found in the alpha subunit. The sequence is that of Succinate--CoA ligase [ADP-forming] subunit beta from Burkholderia lata (strain ATCC 17760 / DSM 23089 / LMG 22485 / NCIMB 9086 / R18194 / 383).